The chain runs to 247 residues: Carboxy-S-adenosyl-L-methionine synthase (247 aa).

Residues Tyr39, 64 to 66 (GCS), 89 to 90 (DN), 117 to 118 (DI), Asn132, and Arg199 each bind S-adenosyl-L-methionine.

This sequence belongs to the class I-like SAM-binding methyltransferase superfamily. Cx-SAM synthase family. Homodimer.

The enzyme catalyses prephenate + S-adenosyl-L-methionine = carboxy-S-adenosyl-L-methionine + 3-phenylpyruvate + H2O. Functionally, catalyzes the conversion of S-adenosyl-L-methionine (SAM) to carboxy-S-adenosyl-L-methionine (Cx-SAM). The sequence is that of Carboxy-S-adenosyl-L-methionine synthase from Citrobacter koseri (strain ATCC BAA-895 / CDC 4225-83 / SGSC4696).